Reading from the N-terminus, the 144-residue chain is Prefoldin subunit alpha (144 aa).

It belongs to the prefoldin alpha subunit family. As to quaternary structure, heterohexamer of two alpha and four beta subunits.

Its subcellular location is the cytoplasm. Molecular chaperone capable of stabilizing a range of proteins. Seems to fulfill an ATP-independent, HSP70-like function in archaeal de novo protein folding. In Methanococcus maripaludis (strain C5 / ATCC BAA-1333), this protein is Prefoldin subunit alpha.